A 145-amino-acid chain; its full sequence is MRTTFMAKATDVERKWLLIDAEGKTLGRLSSEVASLLRGKHKPTFTPHVDCGDHVILINVEKIVLTGNKLDKKVYYRHSGHPGGLKQTVARDLLANKPERMLELAIKGMLPKGSLGRQMFNKLHVYAGDTHKQEAQQPEVYELRG.

The protein belongs to the universal ribosomal protein uL13 family. In terms of assembly, part of the 50S ribosomal subunit.

Functionally, this protein is one of the early assembly proteins of the 50S ribosomal subunit, although it is not seen to bind rRNA by itself. It is important during the early stages of 50S assembly. The sequence is that of Large ribosomal subunit protein uL13 from Exiguobacterium sibiricum (strain DSM 17290 / CCUG 55495 / CIP 109462 / JCM 13490 / 255-15).